Here is a 45-residue protein sequence, read N- to C-terminus: Photosystem II reaction center protein K (45 aa).

Residues 1–8 (MFSINFLG) constitute a propeptide that is removed on maturation. Residues 17 to 37 (FDPIVDVLPIIPLLFLLLAFV) form a helical membrane-spanning segment.

It belongs to the PsbK family. As to quaternary structure, PSII is composed of 1 copy each of membrane proteins PsbA, PsbB, PsbC, PsbD, PsbE, PsbF, PsbH, PsbI, PsbJ, PsbK, PsbL, PsbM, PsbT, PsbY, PsbZ, Psb30/Ycf12, at least 3 peripheral proteins of the oxygen-evolving complex and a large number of cofactors. It forms dimeric complexes.

The protein localises to the plastid. It is found in the chloroplast thylakoid membrane. Functionally, one of the components of the core complex of photosystem II (PSII). PSII is a light-driven water:plastoquinone oxidoreductase that uses light energy to abstract electrons from H(2)O, generating O(2) and a proton gradient subsequently used for ATP formation. It consists of a core antenna complex that captures photons, and an electron transfer chain that converts photonic excitation into a charge separation. This Euglena viridis (Cercaria viridis) protein is Photosystem II reaction center protein K.